The sequence spans 161 residues: Endoribonuclease YbeY (161 aa).

Zn(2+) contacts are provided by histidine 121, histidine 125, and histidine 131.

This sequence belongs to the endoribonuclease YbeY family. The cofactor is Zn(2+).

The protein localises to the cytoplasm. Its function is as follows. Single strand-specific metallo-endoribonuclease involved in late-stage 70S ribosome quality control and in maturation of the 3' terminus of the 16S rRNA. This is Endoribonuclease YbeY from Bordetella avium (strain 197N).